We begin with the raw amino-acid sequence, 738 residues long: Catalase-peroxidase (738 aa).

A signal peptide spans 1–24 (MEPLFPKRLLSIAVLCVASATAQA). The tryptophyl-tyrosyl-methioninium (Trp-Tyr) (with M-252) cross-link spans 104 to 226 (WHAAGTYRMI…FGATEMGLIY (123 aa)). The Proton acceptor role is filled by H105. A disordered region spans residues 191 to 213 (EEVNWGPEGQWLTDRRHSGDRKL). The span at 203–213 (TDRRHSGDRKL) shows a compositional bias: basic and acidic residues. A cross-link (tryptophyl-tyrosyl-methioninium (Tyr-Met) (with W-104)) is located at residues 226–252 (YVNPEGPHGNPDPIAAAHDIRQAFGRM). Residue H267 participates in heme b binding.

It belongs to the peroxidase family. Peroxidase/catalase subfamily. As to quaternary structure, homodimer or homotetramer. It depends on heme b as a cofactor. Formation of the three residue Trp-Tyr-Met cross-link is important for the catalase, but not the peroxidase activity of the enzyme.

The enzyme catalyses H2O2 + AH2 = A + 2 H2O. It carries out the reaction 2 H2O2 = O2 + 2 H2O. In terms of biological role, bifunctional enzyme with both catalase and broad-spectrum peroxidase activity. The chain is Catalase-peroxidase from Saccharophagus degradans (strain 2-40 / ATCC 43961 / DSM 17024).